Reading from the N-terminus, the 1199-residue chain is DNA-directed RNA polymerase subunit beta' (1199 aa).

Zn(2+)-binding residues include C60, C62, C75, and C78. Mg(2+) contacts are provided by D449, D451, and D453. Residues C818, C892, C899, and C902 each coordinate Zn(2+).

It belongs to the RNA polymerase beta' chain family. In terms of assembly, the RNAP catalytic core consists of 2 alpha, 1 beta, 1 beta' and 1 omega subunit. When a sigma factor is associated with the core the holoenzyme is formed, which can initiate transcription. Requires Mg(2+) as cofactor. Zn(2+) is required as a cofactor.

The catalysed reaction is RNA(n) + a ribonucleoside 5'-triphosphate = RNA(n+1) + diphosphate. Its function is as follows. DNA-dependent RNA polymerase catalyzes the transcription of DNA into RNA using the four ribonucleoside triphosphates as substrates. The chain is DNA-directed RNA polymerase subunit beta' from Geobacillus kaustophilus (strain HTA426).